Consider the following 296-residue polypeptide: Formamidopyrimidine-DNA glycosylase (296 aa).

Catalysis depends on Pro-2, which acts as the Schiff-base intermediate with DNA. Glu-3 acts as the Proton donor in catalysis. Lys-61 functions as the Proton donor; for beta-elimination activity in the catalytic mechanism. Residues His-104, Arg-123, and Lys-169 each contribute to the DNA site. An FPG-type zinc finger spans residues 255–289; it reads DAYGREGEPCRRCGAIMRREKFMNRSSFYCPRCQP. Arg-279 acts as the Proton donor; for delta-elimination activity in catalysis.

The protein belongs to the FPG family. Monomer. Zn(2+) is required as a cofactor.

It catalyses the reaction Hydrolysis of DNA containing ring-opened 7-methylguanine residues, releasing 2,6-diamino-4-hydroxy-5-(N-methyl)formamidopyrimidine.. The catalysed reaction is 2'-deoxyribonucleotide-(2'-deoxyribose 5'-phosphate)-2'-deoxyribonucleotide-DNA = a 3'-end 2'-deoxyribonucleotide-(2,3-dehydro-2,3-deoxyribose 5'-phosphate)-DNA + a 5'-end 5'-phospho-2'-deoxyribonucleoside-DNA + H(+). Functionally, involved in base excision repair of DNA damaged by oxidation or by mutagenic agents. Acts as a DNA glycosylase that recognizes and removes damaged bases. Has a preference for oxidized purines, such as 7,8-dihydro-8-oxoguanine (8-oxoG). Has AP (apurinic/apyrimidinic) lyase activity and introduces nicks in the DNA strand. Cleaves the DNA backbone by beta-delta elimination to generate a single-strand break at the site of the removed base with both 3'- and 5'-phosphates. The protein is Formamidopyrimidine-DNA glycosylase of Mycobacterium sp. (strain JLS).